Reading from the N-terminus, the 284-residue chain is 2-dehydro-3-deoxyphosphooctonate aldolase (284 aa).

The protein belongs to the KdsA family.

The protein resides in the cytoplasm. The catalysed reaction is D-arabinose 5-phosphate + phosphoenolpyruvate + H2O = 3-deoxy-alpha-D-manno-2-octulosonate-8-phosphate + phosphate. It functions in the pathway carbohydrate biosynthesis; 3-deoxy-D-manno-octulosonate biosynthesis; 3-deoxy-D-manno-octulosonate from D-ribulose 5-phosphate: step 2/3. It participates in bacterial outer membrane biogenesis; lipopolysaccharide biosynthesis. This Salmonella enteritidis PT4 (strain P125109) protein is 2-dehydro-3-deoxyphosphooctonate aldolase.